A 137-amino-acid chain; its full sequence is Golgin subfamily A member 7 (137 aa).

S-palmitoyl cysteine attachment occurs at residues C69 and C72.

The protein belongs to the ERF4 family. In terms of assembly, interacts with GOLGA3. Interacts with ZDHHC9. Post-translationally, palmitoylated on Cys-69 and Cys-72; which is required for Golgi localization and interaction with GOLGA3.

Its subcellular location is the golgi apparatus membrane. In terms of biological role, may be involved in protein transport from Golgi to cell surface. The ZDHHC9-GOLGA7 complex is a palmitoyltransferase specific for HRAS and NRAS. The protein is Golgin subfamily A member 7 (Golga7) of Rattus norvegicus (Rat).